The primary structure comprises 386 residues: Interleukin-13 receptor subunit alpha-2 (386 aa).

The N-terminal stretch at Met-1–Gly-21 is a signal peptide. Residues Ser-22 to Thr-338 lie on the Extracellular side of the membrane. 3 consecutive Fibronectin type-III domains span residues Pro-33–Gly-133, Lys-138–Ile-234, and Pro-239–Thr-338. A disulfide bond links Cys-64 and Cys-112. A glycan (N-linked (GlcNAc...) asparagine) is linked at Asn-114. Intrachain disulfides connect Cys-144–Cys-154 and Cys-183–Cys-196. Asn-214 and Asn-298 each carry an N-linked (GlcNAc...) asparagine glycan. An intrachain disulfide couples Cys-268 to Cys-315. The short motif at Trp-321–Ser-325 is the WSXWS motif element. Residues Leu-339–Leu-359 form a helical membrane-spanning segment. The Cytoplasmic segment spans residues Leu-360–Cys-386.

It belongs to the type I cytokine receptor family. Type 5 subfamily. As to quaternary structure, interacts with IL4RA. Interacts with high affinity to interleukin-13 (IL13), but not to interleukin-4 (IL4). Post-translationally, cleaved by MMP8 leading to a soluble form that is also able to interact with IL13. In terms of tissue distribution, expressed in kidney, placenta, liver, skeletal muscle and thymus. Expression was not seen in whole blood and heart.

Its subcellular location is the cell membrane. Its function is as follows. Cell surface receptor that plays a role in the regulation of IL-13-mediated responses. Functions as a decoy receptor that inhibits IL-13- and IL-4-mediated signal transduction via the JAK-STAT pathway and thereby modulates immune responses and inflammation. Serves as a functional signaling receptor for IL-13 in an alternative pathway involving AP-1 ultimately leading to the production of TGFB1. The chain is Interleukin-13 receptor subunit alpha-2 (IL13RA2) from Canis lupus familiaris (Dog).